The sequence spans 58 residues: U7-ctenitoxin-Pr1a (58 aa).

6 cysteine pairs are disulfide-bonded: cysteine 2-cysteine 16, cysteine 9-cysteine 22, cysteine 13-cysteine 48, cysteine 15-cysteine 40, cysteine 18-cysteine 55, and cysteine 24-cysteine 38.

In terms of tissue distribution, expressed by the venom gland.

Its subcellular location is the secreted. In terms of biological role, probable neurotoxin. This is U7-ctenitoxin-Pr1a from Phoneutria reidyi (Brazilian Amazonian armed spider).